Reading from the N-terminus, the 428-residue chain is Type II methyltransferase M.BanI (428 aa).

Positions 3–417 (IKFVDLFAGI…EDLFQNNVNE (415 aa)) constitute an SAM-dependent MTase C5-type domain. The active site involves Cys76.

Belongs to the class I-like SAM-binding methyltransferase superfamily. C5-methyltransferase family. In terms of assembly, monomer.

The catalysed reaction is a 2'-deoxycytidine in DNA + S-adenosyl-L-methionine = a 5-methyl-2'-deoxycytidine in DNA + S-adenosyl-L-homocysteine + H(+). In terms of biological role, a methylase, recognizes the double-stranded sequence 5'-GGYRCC-3', methylates C-4 on both strands, and protects the DNA from cleavage by the BanI endonuclease. The chain is Type II methyltransferase M.BanI (banIM) from Aneurinibacillus aneurinilyticus (Bacillus aneurinolyticus).